The following is a 230-amino-acid chain: dITP/XTP pyrophosphatase (230 aa).

Substrate is bound at residue 7-12 (STNPGK). Mg(2+) is bound by residues Glu41 and Asp70. Asp70 serves as the catalytic Proton acceptor. Substrate-binding positions include Ser71, 181 to 184 (FGYD), Lys205, and 210 to 211 (HR).

Belongs to the HAM1 NTPase family. As to quaternary structure, homodimer. Mg(2+) serves as cofactor.

The enzyme catalyses XTP + H2O = XMP + diphosphate + H(+). It carries out the reaction dITP + H2O = dIMP + diphosphate + H(+). The catalysed reaction is ITP + H2O = IMP + diphosphate + H(+). In terms of biological role, pyrophosphatase that catalyzes the hydrolysis of nucleoside triphosphates to their monophosphate derivatives, with a high preference for the non-canonical purine nucleotides XTP (xanthosine triphosphate), dITP (deoxyinosine triphosphate) and ITP. Seems to function as a house-cleaning enzyme that removes non-canonical purine nucleotides from the nucleotide pool, thus preventing their incorporation into DNA/RNA and avoiding chromosomal lesions. The chain is dITP/XTP pyrophosphatase from Anaeromyxobacter sp. (strain Fw109-5).